The following is a 293-amino-acid chain: Acetyl-coenzyme A carboxylase carboxyl transferase subunit beta (293 aa).

Residues 29–293 (LWVKCSECSQ…GVKELAEANT (265 aa)) enclose the CoA carboxyltransferase N-terminal domain. Zn(2+) is bound by residues C33, C36, C52, and C55. A C4-type zinc finger spans residues 33–55 (CSECSQVAYRKDLISNFNVCNNC).

Belongs to the AccD/PCCB family. In terms of assembly, acetyl-CoA carboxylase is a heterohexamer composed of biotin carboxyl carrier protein (AccB), biotin carboxylase (AccC) and two subunits each of ACCase subunit alpha (AccA) and ACCase subunit beta (AccD). The cofactor is Zn(2+).

The protein resides in the cytoplasm. The catalysed reaction is N(6)-carboxybiotinyl-L-lysyl-[protein] + acetyl-CoA = N(6)-biotinyl-L-lysyl-[protein] + malonyl-CoA. The protein operates within lipid metabolism; malonyl-CoA biosynthesis; malonyl-CoA from acetyl-CoA: step 1/1. In terms of biological role, component of the acetyl coenzyme A carboxylase (ACC) complex. Biotin carboxylase (BC) catalyzes the carboxylation of biotin on its carrier protein (BCCP) and then the CO(2) group is transferred by the transcarboxylase to acetyl-CoA to form malonyl-CoA. In Prochlorococcus marinus (strain AS9601), this protein is Acetyl-coenzyme A carboxylase carboxyl transferase subunit beta.